We begin with the raw amino-acid sequence, 512 residues long: 3-ketoacyl-CoA synthase 9 (512 aa).

Transmembrane regions (helical) follow at residues 44–64 and 83–103; these read LITHLFKLCLVPLMAVLVTEI and LVAFIFLSALAIFGSTVYIMS. One can recognise an FAE domain in the interval 100–389; that stretch reads YIMSRPRSVY…FFMTLVTKKL (290 aa). Active-site residues include C244, H323, H407, H411, H440, and N444.

The protein belongs to the thiolase-like superfamily. Chalcone/stilbene synthases family. Expressed in seedlings, stems, leaves, flowers and siliques. Expressed in roots, leaves, and stems, including epidermis, silique walls, sepals, the upper portion of the styles, and seed coats, but not in developing embryos.

The protein localises to the endoplasmic reticulum membrane. It catalyses the reaction a very-long-chain acyl-CoA + malonyl-CoA + H(+) = a very-long-chain 3-oxoacyl-CoA + CO2 + CoA. It participates in lipid metabolism; fatty acid biosynthesis. In terms of biological role, involved in the elongation of C22 to C24 fatty acids, which are precursors for the biosynthesis of cuticular waxes, aliphatic suberins, and membrane lipids, including sphingolipids and phospholipids. In Arabidopsis thaliana (Mouse-ear cress), this protein is 3-ketoacyl-CoA synthase 9.